The following is a 465-amino-acid chain: tRNA modification GTPase MnmE (465 aa).

Residues Arg-21, Glu-85, and Lys-124 each coordinate (6S)-5-formyl-5,6,7,8-tetrahydrofolate. The TrmE-type G domain maps to 220–387; the sequence is GVPVAIIGET…LQQRLVAAAH (168 aa). Residue Asn-230 coordinates K(+). GTP is bound by residues 230 to 235, 249 to 255, and 274 to 277; these read NAGKST, SDIHGTT, and DTAG. A Mg(2+)-binding site is contributed by Ser-234. Residues Ser-249, Ile-251, and Thr-254 each contribute to the K(+) site. Residue Thr-255 participates in Mg(2+) binding. Position 465 (Lys-465) interacts with (6S)-5-formyl-5,6,7,8-tetrahydrofolate.

The protein belongs to the TRAFAC class TrmE-Era-EngA-EngB-Septin-like GTPase superfamily. TrmE GTPase family. As to quaternary structure, homodimer. Heterotetramer of two MnmE and two MnmG subunits. It depends on K(+) as a cofactor.

The protein localises to the cytoplasm. Its function is as follows. Exhibits a very high intrinsic GTPase hydrolysis rate. Involved in the addition of a carboxymethylaminomethyl (cmnm) group at the wobble position (U34) of certain tRNAs, forming tRNA-cmnm(5)s(2)U34. The polypeptide is tRNA modification GTPase MnmE (Bacteroides fragilis (strain ATCC 25285 / DSM 2151 / CCUG 4856 / JCM 11019 / LMG 10263 / NCTC 9343 / Onslow / VPI 2553 / EN-2)).